The chain runs to 353 residues: WAT1-related protein At3g28100 (353 aa).

10 consecutive transmembrane segments (helical) span residues 12 to 32, 43 to 63, 81 to 101, 105 to 125, 137 to 157, 187 to 207, 219 to 239, 252 to 272, 283 to 303, and 308 to 328; these read AVFLTAMLATETGVVGISTLF, YAFLGYSYLLASLLLLPSLFF, IGLLGLLGSMYVITGYIGIEY, TLASAISNITPALTFILAIIF, SVAKVMGTILSLIGALVVVLY, WLIGGALLTIRDIFVSVSFIL, FTVSFLYIVSVSIVTSMIGLV, FDITLITIVTMAIITSVYYVI, LYLAIFKPLSILIAVVMSAVF, and LYLGCLIGGLLITLGFYAVMW. An EamA domain is found at 27 to 155; sequence GISTLFKVAT…LSLIGALVVV (129 aa).

This sequence belongs to the drug/metabolite transporter (DMT) superfamily. Plant drug/metabolite exporter (P-DME) (TC 2.A.7.4) family.

It localises to the membrane. This chain is WAT1-related protein At3g28100, found in Arabidopsis thaliana (Mouse-ear cress).